The sequence spans 473 residues: Laccase-3 (473 aa).

The first 21 residues, 1–21 (MSFSSLRRALVFLGACSSALA), serve as a signal peptide directing secretion. 2 consecutive Plastocyanin-like domains span residues 23–148 (IGPV…LVIY) and 160–298 (VDDE…ILRY). N75 carries an N-linked (GlcNAc...) asparagine glycan. 4 residues coordinate Cu cation: H85, H87, H130, and H132. 2 cysteine pairs are disulfide-bonded: C106–C462 and C138–C221. N-linked (GlcNAc...) asparagine glycosylation is found at N226, N283, N309, N346, N350, and N374. Residues 365-444 (TVPVLLQILN…AGLAIVFAED (80 aa)) enclose the Plastocyanin-like 3 domain. Positions 410, 413, 415, 426, 427, 428, and 432 each coordinate Cu cation. A glycan (N-linked (GlcNAc...) asparagine) is linked at N470.

It belongs to the multicopper oxidase family. Homodimer. The cofactor is Cu cation.

Its subcellular location is the secreted. It carries out the reaction 4 hydroquinone + O2 = 4 benzosemiquinone + 2 H2O. In terms of biological role, lignin degradation and detoxification of lignin-derived products. This Trametes villosa (White-rot fungus) protein is Laccase-3 (LCC3).